Here is a 120-residue protein sequence, read N- to C-terminus: Reprimo-like protein (120 aa).

A helical membrane pass occupies residues valine 67–leucine 87. Serine 109 is modified (phosphoserine).

Belongs to the reprimo family.

The protein resides in the membrane. The protein is Reprimo-like protein (RPRML) of Homo sapiens (Human).